The primary structure comprises 587 residues: Arginine--tRNA ligase (587 aa).

Positions 126–136 (ANPTGPLHVGH) match the 'HIGH' region motif.

The protein belongs to the class-I aminoacyl-tRNA synthetase family. As to quaternary structure, monomer.

The protein resides in the cytoplasm. It catalyses the reaction tRNA(Arg) + L-arginine + ATP = L-arginyl-tRNA(Arg) + AMP + diphosphate. The protein is Arginine--tRNA ligase of Azoarcus sp. (strain BH72).